Here is a 384-residue protein sequence, read N- to C-terminus: Thylakoid membrane protein TERC, chloroplastic (384 aa).

The N-terminal 48 residues, M1–S48, are a transit peptide targeting the chloroplast. Over L49–T115 the chain is Stromal. The disordered stretch occupies residues G68–L104. Positions K76–E88 are enriched in basic and acidic residues. The helical transmembrane segment at S116–L136 threads the bilayer. The Lumenal, thylakoid portion of the chain corresponds to K137–E145. A helical membrane pass occupies residues F146–L166. Residues V167 to K180 are Stromal-facing. Residues V181 to T201 traverse the membrane as a helical segment. Residues A202–K206 are Lumenal, thylakoid-facing. A helical membrane pass occupies residues F207–A227. At S228 to T275 the chain is on the stromal side. Residues V276–G296 form a helical membrane-spanning segment. The Lumenal, thylakoid portion of the chain corresponds to V297–P301. The chain crosses the membrane as a helical span at residues F302–I322. Residues S323–S335 are Stromal-facing. Residues I336–I356 form a helical membrane-spanning segment. A topological domain (lumenal, thylakoid) is located at residue S357. The chain crosses the membrane as a helical span at residues T358–T378. Topologically, residues N379–S384 are stromal.

Interacts with ALB3. As to expression, expressed in roots, rosette and cauline leaves, stems and flowers.

The protein resides in the plastid. It is found in the chloroplast thylakoid membrane. Functionally, integral thylakoid membrane protein that plays a crucial role in thylakoid membrane biogenesis and thylakoid formation in early chloroplast development. Is essential for de novo synthesis of photosystem II (PSII) core proteins and required for efficient insertion of thylakoid membrane proteins, presumably via interaction with ALB3. May assist synthesis of thylakoid membrane proteins at the membrane insertion step. The chain is Thylakoid membrane protein TERC, chloroplastic from Arabidopsis thaliana (Mouse-ear cress).